The chain runs to 406 residues: MRVDLTITNLSEIVSPKGKPPVCGKNMSQLSIRKNKNIAIKDGKIVYIGSEIPPALRTINANGAIALPGLVDPHTHIPFTGNRAHEFIMRLHGKSYMEIMQAGGGILSTVKAVRKASLKELVLRGAYALNEMLKLGVTTVEGKSGYGLEKTAEIKQLKALKLLNKVQLVDVIPTFLGAHALPEEFEDKKEYLNYLSNMLKDVREYTDTVDIFCEKGVFEVEESREFLERAKAMGFRLRLHADELAPSGAGKLAVELGAVSADHLISADDETLEAISKSATTAVILPGTSFFLKERFARGRKMIDLGSAVALASDFNPGSCNIYDPYLIMHLAVTRCGLEIEEAVTAYTINAAHILNLSNRKGKIEEGYDADIVLLGLNSYTEIPYMFSRITVVSVIKSGRVVFHES.

The Fe(3+) site is built by His74 and His76. Zn(2+) is bound by residues His74 and His76. 3 residues coordinate 4-imidazolone-5-propanoate: Arg83, Tyr146, and His179. An N-formimidoyl-L-glutamate-binding site is contributed by Tyr146. Fe(3+) is bound at residue His240. Zn(2+) is bound at residue His240. Residue Glu243 participates in 4-imidazolone-5-propanoate binding. Position 314 (Asp314) interacts with Fe(3+). Asp314 is a Zn(2+) binding site. N-formimidoyl-L-glutamate-binding residues include Asn316 and Gly318. Position 319 (Ser319) interacts with 4-imidazolone-5-propanoate.

The protein belongs to the metallo-dependent hydrolases superfamily. HutI family. Zn(2+) is required as a cofactor. Fe(3+) serves as cofactor.

The protein localises to the cytoplasm. It carries out the reaction 4-imidazolone-5-propanoate + H2O = N-formimidoyl-L-glutamate. It participates in amino-acid degradation; L-histidine degradation into L-glutamate; N-formimidoyl-L-glutamate from L-histidine: step 3/3. In terms of biological role, catalyzes the hydrolytic cleavage of the carbon-nitrogen bond in imidazolone-5-propanoate to yield N-formimidoyl-L-glutamate. It is the third step in the universal histidine degradation pathway. This chain is Imidazolonepropionase, found in Kosmotoga olearia (strain ATCC BAA-1733 / DSM 21960 / TBF 19.5.1).